Consider the following 488-residue polypeptide: Ribulose bisphosphate carboxylase large chain 1 (488 aa).

Asparagine 128 and threonine 178 together coordinate substrate. Lysine 180 functions as the Proton acceptor in the catalytic mechanism. Lysine 182 provides a ligand contact to substrate. Lysine 206, aspartate 208, and glutamate 209 together coordinate Mg(2+). Lysine 206 is subject to N6-carboxylysine. Histidine 298 functions as the Proton acceptor in the catalytic mechanism. Substrate-binding residues include arginine 299, histidine 331, and serine 383.

The protein belongs to the RuBisCO large chain family. Type I subfamily. Heterohexadecamer of 8 large chains and 8 small chains. Mg(2+) serves as cofactor.

It catalyses the reaction 2 (2R)-3-phosphoglycerate + 2 H(+) = D-ribulose 1,5-bisphosphate + CO2 + H2O. The enzyme catalyses D-ribulose 1,5-bisphosphate + O2 = 2-phosphoglycolate + (2R)-3-phosphoglycerate + 2 H(+). In terms of biological role, ruBisCO catalyzes two reactions: the carboxylation of D-ribulose 1,5-bisphosphate, the primary event in carbon dioxide fixation, as well as the oxidative fragmentation of the pentose substrate. Both reactions occur simultaneously and in competition at the same active site. In Methylibium petroleiphilum (strain ATCC BAA-1232 / LMG 22953 / PM1), this protein is Ribulose bisphosphate carboxylase large chain 1.